The following is a 712-amino-acid chain: Ribosomal RNA large subunit methyltransferase K/L (712 aa).

One can recognise a THUMP domain in the interval 46–157; that stretch reads GAYQALLHSR…RENMVVSLDL (112 aa).

Belongs to the methyltransferase superfamily. RlmKL family.

The protein resides in the cytoplasm. The catalysed reaction is guanosine(2445) in 23S rRNA + S-adenosyl-L-methionine = N(2)-methylguanosine(2445) in 23S rRNA + S-adenosyl-L-homocysteine + H(+). It catalyses the reaction guanosine(2069) in 23S rRNA + S-adenosyl-L-methionine = N(2)-methylguanosine(2069) in 23S rRNA + S-adenosyl-L-homocysteine + H(+). Specifically methylates the guanine in position 2445 (m2G2445) and the guanine in position 2069 (m7G2069) of 23S rRNA. This Actinobacillus pleuropneumoniae serotype 5b (strain L20) protein is Ribosomal RNA large subunit methyltransferase K/L.